Here is a 55-residue protein sequence, read N- to C-terminus: Ribulose bisphosphate carboxylase large chain (55 aa).

The active-site Proton acceptor is H18. Substrate-binding residues include R19 and H27.

This sequence belongs to the RuBisCO large chain family. Type I subfamily. In terms of assembly, heterohexadecamer of 8 large chains and 8 small chains; disulfide-linked. The disulfide link is formed within the large subunit homodimers. It depends on Mg(2+) as a cofactor. The disulfide bond which can form in the large chain dimeric partners within the hexadecamer appears to be associated with oxidative stress and protein turnover.

Its subcellular location is the plastid. It localises to the chloroplast. It carries out the reaction 2 (2R)-3-phosphoglycerate + 2 H(+) = D-ribulose 1,5-bisphosphate + CO2 + H2O. The enzyme catalyses D-ribulose 1,5-bisphosphate + O2 = 2-phosphoglycolate + (2R)-3-phosphoglycerate + 2 H(+). In terms of biological role, ruBisCO catalyzes two reactions: the carboxylation of D-ribulose 1,5-bisphosphate, the primary event in carbon dioxide fixation, as well as the oxidative fragmentation of the pentose substrate in the photorespiration process. Both reactions occur simultaneously and in competition at the same active site. This chain is Ribulose bisphosphate carboxylase large chain, found in Vitis sp. (Grape).